Here is a 671-residue protein sequence, read N- to C-terminus: Probable potassium transport system protein Kup (671 aa).

Residues 1 to 43 (MSQIPSPNDPASTGAAPSSAAVPAGPSATPAPSPTAGFSLPGH) form a disordered region. Positions 10 to 37 (PASTGAAPSSAAVPAGPSATPAPSPTAG) are enriched in low complexity. The next 12 membrane-spanning stretches (helical) occupy residues 52–72 (LAALAVGALGVVYGDIGTSPL), 92–112 (VLGVLSLVFWAMTFVVTFKYM), 147–167 (LMLGLFGAALLYGDGIITPAI), 181–201 (PAMERAVVPATVVILVFLFLF), 209–229 (VGAVFGPVMLVWFATIAVLGV), 255–275 (GWHGFLVLGGVVLVITGGEAL), 291–311 (WLGLAMPALLLNYLGQGALLL), 323–343 (LLAPEWALYPTIAIATAAAIV), 381–401 (IYLPEVNWMLGTACLALVLGF), 407–427 (LASAYGIAVTGTMIVTTLLFH), 441–461 (AWPLTVLFLTVDAAFFLANVV), and 465–485 (DGGWFPIAAAALVFTLMSTWK).

Belongs to the HAK/KUP transporter (TC 2.A.72) family.

It localises to the cell inner membrane. It carries out the reaction K(+)(in) + H(+)(in) = K(+)(out) + H(+)(out). In terms of biological role, transport of potassium into the cell. Likely operates as a K(+):H(+) symporter. The protein is Probable potassium transport system protein Kup of Anaeromyxobacter dehalogenans (strain 2CP-1 / ATCC BAA-258).